A 285-amino-acid polypeptide reads, in one-letter code: Probable glucose uptake protein GlcU (285 aa).

10 helical membrane passes run 4 to 21 (FLAILPAIFWGSIVLFNV), 26 to 48 (GPYSQTLGTTFGALIFSIVVYIF), 52 to 71 (VLTPTVIGVGIVSGLFWALG), 84 to 106 (VSRTMPISTGLQLVSTTLFGVIV), 110 to 132 (WSTIISVVLGVLALVCIIIGVIL), 153 to 175 (IIILLISTVGYLVYVVVIRLFNV), 180 to 197 (ALLPQAVGMVLGGILLTF), 210 to 227 (IIPGLIWAAGNMFLFISQ), 232 to 254 (VATSFSLSQMGIIISTLGGILIL), and 266 to 283 (IVVGIVFIIAAGIMLGIA).

The protein belongs to the GRP transporter (TC 2.A.7.5) family.

It localises to the cell membrane. Its function is as follows. Involved in the uptake of glucose. This Bacillus anthracis protein is Probable glucose uptake protein GlcU (glcU).